Consider the following 294-residue polypeptide: UPF0761 membrane protein YPK_4186 (294 aa).

The next 7 helical transmembrane spans lie at 44-64, 67-87, 108-128, 136-156, 185-205, 212-232, and 246-266; these read LLSL…FPMF, ISIK…GDII, GLIV…NIIW, LVFS…LVGA, VFPL…VPTV, ALIG…GFAM, and VLAV…IVLL.

It belongs to the UPF0761 family.

The protein resides in the cell inner membrane. This chain is UPF0761 membrane protein YPK_4186, found in Yersinia pseudotuberculosis serotype O:3 (strain YPIII).